The primary structure comprises 931 residues: Protein phosphatase 1 regulatory subunit 37 homolog (931 aa).

The disordered stretch occupies residues 20–71 (TAASSPASPIPPTSPSMFATPPHQQSHSSATSVRKKVCQEANSSADDPDSDA). Residues 41–51 (PHQQSHSSATS) are compositionally biased toward polar residues. 8 LRR repeats span residues 232–259 (AISL…LARA), 262–285 (SASL…VLIC), 290–314 (NTGI…IYQL), 323–346 (LLDL…LRNR), 351–374 (KSAL…SLAE), 379–407 (NTKI…LVSN), 409–430 (HLHR…ILAE), and 435–458 (NTAL…ALHS). A compositionally biased stretch (basic and acidic residues) spans 519 to 533 (QDHVSEDTEKENKDA). Disordered regions lie at residues 519-602 (QDHV…RHQR) and 780-807 (PDCT…IRQR). The segment covering 534 to 547 (DNDDKEPENEDGDT) has biased composition (acidic residues). Residues 554-563 (SDASADQSDS) are compositionally biased toward low complexity. Basic and acidic residues-rich tracts occupy residues 564-584 (PADK…EKRP) and 790-807 (TTSR…IRQR).

This sequence belongs to the PPP1R37 family.

The polypeptide is Protein phosphatase 1 regulatory subunit 37 homolog (Caenorhabditis briggsae).